Reading from the N-terminus, the 308-residue chain is Porphobilinogen deaminase (308 aa).

Cysteine 241 carries the post-translational modification S-(dipyrrolylmethanemethyl)cysteine.

This sequence belongs to the HMBS family. In terms of assembly, monomer. Requires dipyrromethane as cofactor.

It carries out the reaction 4 porphobilinogen + H2O = hydroxymethylbilane + 4 NH4(+). It functions in the pathway porphyrin-containing compound metabolism; protoporphyrin-IX biosynthesis; coproporphyrinogen-III from 5-aminolevulinate: step 2/4. Its function is as follows. Tetrapolymerization of the monopyrrole PBG into the hydroxymethylbilane pre-uroporphyrinogen in several discrete steps. This Staphylococcus aureus (strain bovine RF122 / ET3-1) protein is Porphobilinogen deaminase.